We begin with the raw amino-acid sequence, 767 residues long: Cap-specific mRNA (nucleoside-2'-O-)-methyltransferase 2 (767 aa).

The 214-residue stretch at 109–322 folds into the Adrift-type SAM-dependent 2'-O-MTase domain; sequence ELCTQAWCKF…VYVVCLRYKG (214 aa). Lys-117 is an active-site residue. Residues Gly-148, Trp-167, and Asp-235 each coordinate S-adenosyl-L-methionine. Residue Asp-235 is part of the active site. Lys-275 (proton acceptor) is an active-site residue.

Its subcellular location is the nucleus. The protein resides in the cytoplasm. It catalyses the reaction a 5'-end (N(7)-methyl 5'-triphosphoguanosine)-(2'-O-methyl-ribonucleoside)-(ribonucleotide) in mRNA + S-adenosyl-L-methionine = a 5'-end (N(7)-methyl 5'-triphosphoguanosine)-(2'-O-methyl-ribonucleoside)-(2'-O-methyl-ribonucleotide) in mRNA + S-adenosyl-L-homocysteine + H(+). S-adenosyl-L-methionine-dependent methyltransferase that mediates mRNA cap2 2'-O-ribose methylation to the 5'-cap structure of mRNAs. Methylates the ribose of the second nucleotide of a m(7)GpppG-capped mRNA and small nuclear RNA (snRNA) (cap0) to produce m(7)GpppRmpNm (cap2). Recognizes a guanosine cap on RNA independently of its N(7) methylation status. Display cap2 methylation on both cap0 and cap1. Displays a preference for cap1 RNAs. This is Cap-specific mRNA (nucleoside-2'-O-)-methyltransferase 2 (Cmtr2) from Mus musculus (Mouse).